We begin with the raw amino-acid sequence, 85 residues long: ATP synthase subunit c (85 aa).

The next 2 membrane-spanning stretches (helical) occupy residues Ile10–Leu30 and Phe53–Phe73.

Belongs to the ATPase C chain family. As to quaternary structure, F-type ATPases have 2 components, F(1) - the catalytic core - and F(0) - the membrane proton channel. F(1) has five subunits: alpha(3), beta(3), gamma(1), delta(1), epsilon(1). F(0) has three main subunits: a(1), b(2) and c(10-14). The alpha and beta chains form an alternating ring which encloses part of the gamma chain. F(1) is attached to F(0) by a central stalk formed by the gamma and epsilon chains, while a peripheral stalk is formed by the delta and b chains.

It localises to the cell inner membrane. F(1)F(0) ATP synthase produces ATP from ADP in the presence of a proton or sodium gradient. F-type ATPases consist of two structural domains, F(1) containing the extramembraneous catalytic core and F(0) containing the membrane proton channel, linked together by a central stalk and a peripheral stalk. During catalysis, ATP synthesis in the catalytic domain of F(1) is coupled via a rotary mechanism of the central stalk subunits to proton translocation. In terms of biological role, key component of the F(0) channel; it plays a direct role in translocation across the membrane. A homomeric c-ring of between 10-14 subunits forms the central stalk rotor element with the F(1) delta and epsilon subunits. The sequence is that of ATP synthase subunit c from Pseudomonas syringae pv. syringae (strain B728a).